The primary structure comprises 244 residues: B3 domain-containing protein At2g36080 (244 aa).

A DNA-binding region (TF-B3) is located at residues 38–144 (FEKPLTPSDV…RFFIGWRRRG (107 aa)).

The protein resides in the nucleus. This chain is B3 domain-containing protein At2g36080 (ARF31), found in Arabidopsis thaliana (Mouse-ear cress).